Here is a 265-residue protein sequence, read N- to C-terminus: Cytochrome b-c1 complex subunit Rieske, mitochondrial (265 aa).

The N-terminal 53 residues, 1-53 (MLRVAGRRLSSSAARSSSTFFTRSSFTVTDDSSPARSPSPSLTSSFLDQIRGF), are a transit peptide targeting the mitochondrion. Topologically, residues 54-102 (SSNSVSPAHQLGLVSDLPATVAAIKNPSSKIVYDDSNHERYPPGDPSKR) are mitochondrial matrix. A helical transmembrane segment spans residues 103–125 (AFAYFVLTGGRFVYASSVRLLIL). Topologically, residues 126 to 265 (KFVLSMSASK…FLEENKLLIG (140 aa)) are mitochondrial intermembrane. Positions 175 to 263 (IKLANSVDLG…YSFLEENKLL (89 aa)) constitute a Rieske domain. [2Fe-2S] cluster is bound by residues cysteine 208, histidine 210, cysteine 227, and histidine 230. A disulfide bridge links cysteine 213 with cysteine 229.

This sequence belongs to the Rieske iron-sulfur protein family. In terms of assembly, component of the ubiquinol-cytochrome c oxidoreductase (cytochrome b-c1 complex, complex III, CIII), a multisubunit enzyme composed of 3 respiratory subunits cytochrome b, cytochrome c1 and Rieske protein, 2 core protein subunits, and several low-molecular weight protein subunits. The complex exists as an obligatory dimer and forms supercomplexes (SCs) in the inner mitochondrial membrane with cytochrome c oxidase (complex IV, CIV). [2Fe-2S] cluster serves as cofactor.

Its subcellular location is the mitochondrion inner membrane. It carries out the reaction a quinol + 2 Fe(III)-[cytochrome c](out) = a quinone + 2 Fe(II)-[cytochrome c](out) + 2 H(+)(out). Its function is as follows. Component of the ubiquinol-cytochrome c oxidoreductase, a multisubunit transmembrane complex that is part of the mitochondrial electron transport chain which drives oxidative phosphorylation. The respiratory chain contains 3 multisubunit complexes succinate dehydrogenase (complex II, CII), ubiquinol-cytochrome c oxidoreductase (cytochrome b-c1 complex, complex III, CIII) and cytochrome c oxidase (complex IV, CIV), that cooperate to transfer electrons derived from NADH and succinate to molecular oxygen, creating an electrochemical gradient over the inner membrane that drives transmembrane transport and the ATP synthase. The cytochrome b-c1 complex catalyzes electron transfer from ubiquinol to cytochrome c, linking this redox reaction to translocation of protons across the mitochondrial inner membrane, with protons being carried across the membrane as hydrogens on the quinol. In the process called Q cycle, 2 protons are consumed from the matrix, 4 protons are released into the intermembrane space and 2 electrons are passed to cytochrome c. The Rieske protein is a catalytic core subunit containing a [2Fe-2S] iron-sulfur cluster. It cycles between 2 conformational states during catalysis to transfer electrons from the quinol bound in the Q(0) site in cytochrome b to cytochrome c1. This Solanum tuberosum (Potato) protein is Cytochrome b-c1 complex subunit Rieske, mitochondrial (FES1).